The primary structure comprises 543 residues: Heparanase (543 aa).

The signal sequence occupies residues 1–35 (MLLRSKPALPPPLMLLLLGPLGPLSPGALPRPAQA). Residues 62-64 (DAN) and Thr-97 each bind heparan sulfate group. A propeptide spans 110 to 157 (STFEERSYWQSQVNQDICKYGSIPPDVEEKLRLEWPYQEQLLLREHYQ) (linker peptide). A disulfide bridge connects residues Cys-127 and Cys-179. Heparan sulfate group is bound at residue 158–162 (KKFKN). 4 N-linked (GlcNAc...) asparagine glycosylation sites follow: Asn-162, Asn-178, Asn-200, and Asn-217. Glu-225 acts as the Proton donor in catalysis. Asn-238 carries N-linked (GlcNAc...) asparagine glycosylation. Heparan sulfate group is bound by residues 270–280 (QPRRKTAKMLK), His-296, and Arg-303. The tract at residues 288–417 (EVIDSVTWHH…LLFKKLVGTK (130 aa)) is required for heterodimerization with the heparanase 8 kDa subunit. The active-site Nucleophile is the Glu-343. Heparan sulfate group-binding positions include 348–350 (YGG) and 389–391 (GNY). An intrachain disulfide couples Cys-437 to Cys-542. N-linked (GlcNAc...) asparagine glycosylation is present at Asn-459. Residues 527–543 (FSYSFFVIRNAKVAACI) are required for transferring proheparanase to the Golgi apparatus, secretion and subsequent enzyme activity and for enhancement of PKB/AKT1 phosphorylation.

Belongs to the glycosyl hydrolase 79 family. Heterodimer; heterodimer formation between the 8 kDa and the 50 kDa subunits is required for enzyme activity. Interacts with TF; the interaction, inhibited by heparin, enhances the generation of activated factor X and activates coagulation. Interacts with HRG; the interaction is enhanced at acidic pH, partially inhibits binding of HPSE to cell surface receptors and modulates its enzymatic activity. Interacts with SDC1; the interaction enhances the shedding of SDC1. Interacts with HPSE2. Proteolytically processed. The cleavage of the 65 kDa form leads to the generation of a linker peptide, and 8 kDa and 50 kDa products. The active form, the 8/50 kDa heterodimer, is resistant to degradation. Complete removal of the linker peptide appears to be a prerequisite to the complete activation of the enzyme. In terms of processing, N-glycosylated. Glycosylation of the 50 kDa subunit appears to be essential for its solubility. In terms of tissue distribution, highly expressed in placenta and spleen and weakly expressed in lymph node, thymus, peripheral blood leukocytes, bone marrow, endothelial cells, fetal liver and tumor tissues. Also expressed in hair follicles, specifically in both Henle's and Huxley's layers of inner the root sheath (IRS) at anagen phase.

It localises to the lysosome membrane. It is found in the secreted. The protein localises to the nucleus. The enzyme catalyses endohydrolysis of (1-&gt;4)-beta-D-glycosidic bonds of heparan sulfate chains in heparan sulfate proteoglycan.. Inhibited by EDTA, laminarin sulfate and, to a lower extent, by heparin and sulfamin and activated by calcium and magnesium. Endoglycosidase that cleaves heparan sulfate proteoglycans (HSPGs) into heparan sulfate side chains and core proteoglycans. Participates in extracellular matrix (ECM) degradation and remodeling. Selectively cleaves the linkage between a glucuronic acid unit and an N-sulfo glucosamine unit carrying either a 3-O-sulfo or a 6-O-sulfo group. Can also cleave the linkage between a glucuronic acid unit and an N-sulfo glucosamine unit carrying a 2-O-sulfo group, but not linkages between a glucuronic acid unit and a 2-O-sulfated iduronic acid moiety. It is essentially inactive at neutral pH but becomes active under acidic conditions such as during tumor invasion and in inflammatory processes. Facilitates cell migration associated with metastasis, wound healing and inflammation. Enhances shedding of syndecans, and increases endothelial invasion and angiogenesis in myelomas. Acts as a procoagulant by increasing the generation of activation factor X in the presence of tissue factor and activation factor VII. Increases cell adhesion to the extracellular matrix (ECM), independent of its enzymatic activity. Induces AKT1/PKB phosphorylation via lipid rafts increasing cell mobility and invasion. Heparin increases this AKT1/PKB activation. Regulates osteogenesis. Enhances angiogenesis through up-regulation of SRC-mediated activation of VEGF. Implicated in hair follicle inner root sheath differentiation and hair homeostasis. This is Heparanase (HPSE) from Homo sapiens (Human).